The following is a 428-amino-acid chain: Serine--tRNA ligase (428 aa).

Thr-231–Glu-233 is a binding site for L-serine. Residue Arg-262 to Glu-264 coordinates ATP. Glu-285 lines the L-serine pocket. Glu-349 to Ser-352 provides a ligand contact to ATP. An L-serine-binding site is contributed by Ser-385.

This sequence belongs to the class-II aminoacyl-tRNA synthetase family. Type-1 seryl-tRNA synthetase subfamily. In terms of assembly, homodimer. The tRNA molecule binds across the dimer.

The protein resides in the cytoplasm. It catalyses the reaction tRNA(Ser) + L-serine + ATP = L-seryl-tRNA(Ser) + AMP + diphosphate + H(+). The catalysed reaction is tRNA(Sec) + L-serine + ATP = L-seryl-tRNA(Sec) + AMP + diphosphate + H(+). It functions in the pathway aminoacyl-tRNA biosynthesis; selenocysteinyl-tRNA(Sec) biosynthesis; L-seryl-tRNA(Sec) from L-serine and tRNA(Sec): step 1/1. In terms of biological role, catalyzes the attachment of serine to tRNA(Ser). Is also able to aminoacylate tRNA(Sec) with serine, to form the misacylated tRNA L-seryl-tRNA(Sec), which will be further converted into selenocysteinyl-tRNA(Sec). This chain is Serine--tRNA ligase, found in Staphylococcus aureus (strain Mu3 / ATCC 700698).